Here is a 318-residue protein sequence, read N- to C-terminus: Forkhead box protein I2 (318 aa).

The interval 1–30 (MATYCDDLGPSSAPPGQAQATAHPPGYEPG) is disordered. The fork-head DNA-binding region spans 102-196 (RPPYSYSALI…DNGNFRRKRK (95 aa)).

Its subcellular location is the nucleus. Possible transcriptional activator. In Homo sapiens (Human), this protein is Forkhead box protein I2 (FOXI2).